We begin with the raw amino-acid sequence, 861 residues long: Leucine--tRNA ligase (861 aa).

The 'HIGH' region motif lies at 42 to 52 (PYPSGRIHMGH). The 'KMSKS' region signature appears at 623-627 (KMSKS). Residue lysine 626 coordinates ATP.

It belongs to the class-I aminoacyl-tRNA synthetase family.

It is found in the cytoplasm. It catalyses the reaction tRNA(Leu) + L-leucine + ATP = L-leucyl-tRNA(Leu) + AMP + diphosphate. This chain is Leucine--tRNA ligase, found in Caulobacter sp. (strain K31).